The primary structure comprises 215 residues: Histidine biosynthesis bifunctional protein HisIE (215 aa).

Residues 1–114 (MLKKHDLLNL…FISNKYNINF (114 aa)) form a phosphoribosyl-AMP cyclohydrolase region. The phosphoribosyl-ATP pyrophosphohydrolase stretch occupies residues 115 to 215 (LFKLEEIIEE…LNTNSEKLLK (101 aa)).

The protein in the N-terminal section; belongs to the PRA-CH family. It in the C-terminal section; belongs to the PRA-PH family.

Its subcellular location is the cytoplasm. The enzyme catalyses 1-(5-phospho-beta-D-ribosyl)-ATP + H2O = 1-(5-phospho-beta-D-ribosyl)-5'-AMP + diphosphate + H(+). It carries out the reaction 1-(5-phospho-beta-D-ribosyl)-5'-AMP + H2O = 1-(5-phospho-beta-D-ribosyl)-5-[(5-phospho-beta-D-ribosylamino)methylideneamino]imidazole-4-carboxamide. It functions in the pathway amino-acid biosynthesis; L-histidine biosynthesis; L-histidine from 5-phospho-alpha-D-ribose 1-diphosphate: step 2/9. The protein operates within amino-acid biosynthesis; L-histidine biosynthesis; L-histidine from 5-phospho-alpha-D-ribose 1-diphosphate: step 3/9. The polypeptide is Histidine biosynthesis bifunctional protein HisIE (hisI) (Buchnera aphidicola subsp. Acyrthosiphon pisum (strain APS) (Acyrthosiphon pisum symbiotic bacterium)).